The primary structure comprises 134 residues: Small ribosomal subunit protein uS12 (134 aa).

Residues 1–30 (MPTINQLVKHGREKVKEKSKSPALQGHPQK) are disordered. D89 is modified (3-methylthioaspartic acid). Positions 106–134 (GVENRRQSRSKYGAKRPKAGAAAGAKGKK) are disordered. Basic residues predominate over residues 112–123 (QSRSKYGAKRPK). The segment covering 124–134 (AGAAAGAKGKK) has biased composition (low complexity).

This sequence belongs to the universal ribosomal protein uS12 family. Part of the 30S ribosomal subunit. Contacts proteins S8 and S17. May interact with IF1 in the 30S initiation complex.

Its function is as follows. With S4 and S5 plays an important role in translational accuracy. In terms of biological role, interacts with and stabilizes bases of the 16S rRNA that are involved in tRNA selection in the A site and with the mRNA backbone. Located at the interface of the 30S and 50S subunits, it traverses the body of the 30S subunit contacting proteins on the other side and probably holding the rRNA structure together. The combined cluster of proteins S8, S12 and S17 appears to hold together the shoulder and platform of the 30S subunit. This chain is Small ribosomal subunit protein uS12, found in Fervidobacterium nodosum (strain ATCC 35602 / DSM 5306 / Rt17-B1).